The sequence spans 122 residues: Large ribosomal subunit protein uL14 (122 aa).

The protein belongs to the universal ribosomal protein uL14 family. Part of the 50S ribosomal subunit. Forms a cluster with proteins L3 and L19. In the 70S ribosome, L14 and L19 interact and together make contacts with the 16S rRNA in bridges B5 and B8.

Functionally, binds to 23S rRNA. Forms part of two intersubunit bridges in the 70S ribosome. This chain is Large ribosomal subunit protein uL14, found in Fusobacterium nucleatum subsp. nucleatum (strain ATCC 25586 / DSM 15643 / BCRC 10681 / CIP 101130 / JCM 8532 / KCTC 2640 / LMG 13131 / VPI 4355).